The following is a 113-amino-acid chain: Beta-defensin 112 (113 aa).

Disulfide bonds link Cys-54–Cys-82, Cys-61–Cys-75, and Cys-65–Cys-83.

The protein belongs to the beta-defensin family.

The protein resides in the secreted. Functionally, has antibacterial activity. This chain is Beta-defensin 112 (DEFB112), found in Pan troglodytes (Chimpanzee).